A 177-amino-acid chain; its full sequence is Translation initiation factor IF-3 (177 aa).

The protein belongs to the IF-3 family. Monomer.

The protein resides in the cytoplasm. IF-3 binds to the 30S ribosomal subunit and shifts the equilibrium between 70S ribosomes and their 50S and 30S subunits in favor of the free subunits, thus enhancing the availability of 30S subunits on which protein synthesis initiation begins. This is Translation initiation factor IF-3 from Clostridium perfringens (strain 13 / Type A).